The sequence spans 461 residues: tRNA modification GTPase MnmE (461 aa).

(6S)-5-formyl-5,6,7,8-tetrahydrofolate is bound by residues R27, E89, and R128. The TrmE-type G domain occupies 224–382 (GLATAIVGRP…LENAIEQLFF (159 aa)). N234 is a K(+) binding site. Residues 234–239 (NVGKSS), 253–259 (TDIAGTT), and 278–281 (DTAG) each bind GTP. S238 serves as a coordination point for Mg(2+). The K(+) site is built by T253, I255, and T258. Residue T259 coordinates Mg(2+). Residue K461 participates in (6S)-5-formyl-5,6,7,8-tetrahydrofolate binding.

Belongs to the TRAFAC class TrmE-Era-EngA-EngB-Septin-like GTPase superfamily. TrmE GTPase family. As to quaternary structure, homodimer. Heterotetramer of two MnmE and two MnmG subunits. The cofactor is K(+).

The protein resides in the cytoplasm. Functionally, exhibits a very high intrinsic GTPase hydrolysis rate. Involved in the addition of a carboxymethylaminomethyl (cmnm) group at the wobble position (U34) of certain tRNAs, forming tRNA-cmnm(5)s(2)U34. The sequence is that of tRNA modification GTPase MnmE from Lactobacillus johnsonii (strain CNCM I-12250 / La1 / NCC 533).